The chain runs to 354 residues: Uroporphyrinogen decarboxylase (354 aa).

Substrate contacts are provided by residues 27 to 31, aspartate 77, tyrosine 154, serine 209, and histidine 327; that span reads RQAGR.

The protein belongs to the uroporphyrinogen decarboxylase family. As to quaternary structure, homodimer.

It localises to the cytoplasm. The catalysed reaction is uroporphyrinogen III + 4 H(+) = coproporphyrinogen III + 4 CO2. It participates in porphyrin-containing compound metabolism; protoporphyrin-IX biosynthesis; coproporphyrinogen-III from 5-aminolevulinate: step 4/4. Its function is as follows. Catalyzes the decarboxylation of four acetate groups of uroporphyrinogen-III to yield coproporphyrinogen-III. The chain is Uroporphyrinogen decarboxylase from Pseudomonas syringae pv. syringae (strain B728a).